Here is a 1014-residue protein sequence, read N- to C-terminus: Calcium-transporting ATPase 2, plasma membrane-type (1014 aa).

Methionine 1 bears the N-acetylmethionine mark. The Cytoplasmic portion of the chain corresponds to 1–160 (MESYLNENFD…NKFAESEMRG (160 aa)). Positions 20-31 (VLEKWRNLCGVV) are interaction with calmodulin. A Phosphoserine; by CPK1 modification is found at serine 45. The chain crosses the membrane as a helical span at residues 161–181 (FWVFVWEALQDMTLMILGVCA). The Lumenal segment spans residues 182–199 (FVSLIVGIATEGWPKGSH). A helical membrane pass occupies residues 200 to 220 (DGLGIAASILLVVFVTATSDY). Residues 221-348 (RQSLQFRDLD…DDETPLQVKL (128 aa)) are Cytoplasmic-facing. A helical membrane pass occupies residues 349-368 (NGVATIIGKIGLFFAVVTFA). Residues 369–398 (VLVQGMFMRKLSTGTHWVWSGDEALELLEY) are Lumenal-facing. Residues 399-416 (FAIAVTIVVVAVPEGLPL) traverse the membrane as a helical segment. The Cytoplasmic portion of the chain corresponds to 417–810 (AVTLSLAFAM…KWGRSVYINI (394 aa)). Aspartate 454 acts as the 4-aspartylphosphate intermediate in catalysis. Residues aspartate 755 and aspartate 759 each coordinate Mg(2+). Residues 811–829 (QKFVQFQLTVNVVALVVNF) traverse the membrane as a helical segment. Over 830–840 (SSACLTGSAPL) the chain is Lumenal. A helical transmembrane segment spans residues 841–861 (TAVQLLWVNMIMDTLGALALA). The Cytoplasmic portion of the chain corresponds to 862-881 (TEPPNDELMKRLPVGRRGNF). A helical transmembrane segment spans residues 882 to 904 (ITNAMWRNILGQAVYQFIVIWIL). At 905–916 (QAKGKAMFGLDG) the chain is on the lumenal side. A helical transmembrane segment spans residues 917 to 938 (PDSTLMLNTLIFNCFVFCQVFN). The Cytoplasmic segment spans residues 939–956 (EISSREMEEIDVFKGILD). A helical transmembrane segment spans residues 957-978 (NYVFVVVIGATVFFQIIIIEFL). Topologically, residues 979-988 (GTFASTTPLT) are lumenal. A helical transmembrane segment spans residues 989-1010 (ITQWIFSIFIGFLGMPIAAGLK). Over 1011–1014 (TIPV) the chain is Cytoplasmic.

The protein belongs to the cation transport ATPase (P-type) (TC 3.A.3) family. Type IIB subfamily.

Its subcellular location is the endoplasmic reticulum membrane. The catalysed reaction is Ca(2+)(in) + ATP + H2O = Ca(2+)(out) + ADP + phosphate + H(+). Activated by calmodulin. Its function is as follows. This magnesium-dependent enzyme catalyzes the hydrolysis of ATP coupled with the translocation of calcium from the cytosol into the endoplasmic reticulum. The polypeptide is Calcium-transporting ATPase 2, plasma membrane-type (ACA2) (Arabidopsis thaliana (Mouse-ear cress)).